Reading from the N-terminus, the 66-residue chain is Large ribosomal subunit protein uL29 (66 aa).

The protein belongs to the universal ribosomal protein uL29 family.

The polypeptide is Large ribosomal subunit protein uL29 (Sinorhizobium fredii (strain NBRC 101917 / NGR234)).